A 208-amino-acid chain; its full sequence is FMN-dependent NADH:quinone oxidoreductase 1 (208 aa).

An FMN-binding site is contributed by 17 to 19 (SVS).

The protein belongs to the azoreductase type 1 family. Homodimer. The cofactor is FMN.

It catalyses the reaction 2 a quinone + NADH + H(+) = 2 a 1,4-benzosemiquinone + NAD(+). The catalysed reaction is N,N-dimethyl-1,4-phenylenediamine + anthranilate + 2 NAD(+) = 2-(4-dimethylaminophenyl)diazenylbenzoate + 2 NADH + 2 H(+). Functionally, quinone reductase that provides resistance to thiol-specific stress caused by electrophilic quinones. Also exhibits azoreductase activity. Catalyzes the reductive cleavage of the azo bond in aromatic azo compounds to the corresponding amines. The protein is FMN-dependent NADH:quinone oxidoreductase 1 of Listeria monocytogenes serotype 4b (strain F2365).